The primary structure comprises 551 residues: MVIIMSEAELKEAMKRNPHLRRYIENFKRTYMRIPDFMVSLSRELKELKYPNIIYPVGDPIFIHIFGTPETKTKYIVIEPTLETAEEKLKYKMILNKILELAPYEETPKSVEEFEEVLTRLFNACTKVTEAVGEEGFFQRIFRFADNKIKITPEERDKFLYILKRDLIGLGNLEPIGRDPYLEDIHVIGPKNCHVVHKIFGMLPTNITWEDEIELADYLKNLGERMGRPVSDANPIVDGTLPDGSRINIIYSTDVSPKGPSFTIRKFTDVPISVTQLISWGTFSTEVAAYLWLCLEYGMSIFICGETASGKTTTLNAILPFIKPNSKIFSCEDTPEVKPPHPVWQQLVTRERGPEESRVTLFDLLRAALRSRPNYIIVGEIRSVEAAVAFQAMQTGHPVLSTFHAANVRKMIQRLNGDPINVPLTFMDNLNVALFQLAVYQRGKVLRRVVSIEEIEGYYKEVDGVVTRAVFQWEPDKDRHVFTGRNNSYVLEEKIAKAAGYEDPRDIYNELELRARILEEMIAREIFDYYQVRDIIWAFYEKGLEGLPFPI.

The protein belongs to the GSP E family.

This is an uncharacterized protein from Methanocaldococcus jannaschii (strain ATCC 43067 / DSM 2661 / JAL-1 / JCM 10045 / NBRC 100440) (Methanococcus jannaschii).